The sequence spans 209 residues: Outer-membrane lipoprotein LolB (209 aa).

The signal sequence occupies residues 1–17; it reads MATVFSRALGALVLGVA. Cysteine 18 carries the N-palmitoyl cysteine lipid modification. Residue cysteine 18 is the site of S-diacylglycerol cysteine attachment.

It belongs to the LolB family. Monomer.

The protein localises to the cell outer membrane. In terms of biological role, plays a critical role in the incorporation of lipoproteins in the outer membrane after they are released by the LolA protein. In Ralstonia nicotianae (strain ATCC BAA-1114 / GMI1000) (Ralstonia solanacearum), this protein is Outer-membrane lipoprotein LolB.